A 398-amino-acid polypeptide reads, in one-letter code: Polyferredoxin protein VhuB (398 aa).

4Fe-4S ferredoxin-type domains are found at residues 2–31 (AGIKIQEDACLVCNACSKACPTEAIEIAPF), 25–53 (AIEIAPFKTCTLCFSCASACPTGALVENN), 54–83 (GKLIYNSSKCIKCGNCATACPTGIKKVDDR), 82–111 (DRFPYSKGHCVLCEKCVDACPIDIISIPGK), 123–152 (QEPIKVTEACVGCSECVPVCPVDAISIEDE), 152–181 (ELAVIDTEKCIYCSVCAQTCPWNAIYVAGK), 191–219 (KSFTVTEECIGCEKCVEVCPGDMITYNRE), 220–249 (DLIVKLPEACPACHLCEQNCPVDAISLEVE), 259–291 (EGLVWYEDKCNYCGPCAIKCPLCPTNAINMINQ), 300–331 (TKTDKDPEFRMCIRCGACVMKCPTGALKMGKI), and 339–368 (NRIEFSPALCNECGECVDVCPQDTLKLTGD). Cys-11, Cys-14, Cys-17, Cys-21, Cys-34, Cys-37, Cys-40, Cys-44, Cys-63, Cys-66, Cys-69, Cys-73, Cys-91, Cys-94, Cys-97, Cys-101, Cys-132, Cys-135, Cys-138, Cys-142, Cys-161, Cys-164, Cys-167, Cys-171, Cys-199, Cys-202, Cys-205, Cys-209, Cys-229, Cys-232, Cys-235, Cys-239, Cys-268, Cys-271, Cys-274, Cys-278, Cys-311, Cys-314, Cys-317, Cys-321, Cys-348, Cys-351, Cys-354, Cys-358, Cys-377, Cys-380, Cys-383, and Cys-387 together coordinate [4Fe-4S] cluster.

The cofactor is [4Fe-4S] cluster.

This Methanococcus voltae protein is Polyferredoxin protein VhuB (vhuB).